The primary structure comprises 139 residues: Transcription antitermination protein NusB (139 aa).

It belongs to the NusB family.

Involved in transcription antitermination. Required for transcription of ribosomal RNA (rRNA) genes. Binds specifically to the boxA antiterminator sequence of the ribosomal RNA (rrn) operons. The protein is Transcription antitermination protein NusB of Nitratiruptor sp. (strain SB155-2).